Reading from the N-terminus, the 319-residue chain is Transcription factor bHLH111 (319 aa).

Residues 1–23 (MDHHHHIASRNSSTTSELPSFEP) form a disordered region. The segment covering 9–18 (SRNSSTTSEL) has biased composition (polar residues). The bHLH domain occupies 195 to 244 (SEGSTLSPEKELPKAKLRDKITTLQQIVSPFGKTDTASVLQEAITYINFY).

Homodimer.

It is found in the nucleus. This Arabidopsis thaliana (Mouse-ear cress) protein is Transcription factor bHLH111 (BHLH111).